A 397-amino-acid polypeptide reads, in one-letter code: Ubiquitin-like modifier-activating enzyme 5 (397 aa).

Gly77, Asp98, Lys121, Asn144, and Asn178 together coordinate ATP. Positions 220 and 223 each coordinate Zn(2+). The active-site Glycyl thioester intermediate is the Cys244. Residues Cys297 and Cys302 each coordinate Zn(2+). Residues 329–341 (VVHEDNDWGIELV) carry the UFM1-interacting sequence (UIS) motif. Positions 342 to 372 (SEVSEEELKAASGPVPDLPEGIKVAYTIPIT) are linker. Residues 382-397 (DSEQSLDELMAQMKNL) carry the UFC1-binding sequence (UFC) motif.

It belongs to the ubiquitin-activating E1 family. UBA5 subfamily. As to quaternary structure, homodimer; homodimerization is required for ufm1 activation. Interacts (via UIS motif) with ufm1; binds ufm1 via a trans-binding mechanism in which ufm1 interacts with distinct sites in both subunits of the uba5 homodimer. Interacts (via C-terminus) with ufc1.

Its subcellular location is the cytoplasm. The protein resides in the nucleus. It is found in the endoplasmic reticulum membrane. It localises to the golgi apparatus. E1-like enzyme which specifically catalyzes the first step in ufmylation. Activates ufm1 by first adenylating its C-terminal glycine residue with ATP, and thereafter linking this residue to the side chain of a cysteine residue in E1, yielding a ufm1-E1 thioester and free AMP. Activates ufm1 via a trans-binding mechanism, in which ufm1 interacts with distinct sites in both subunits of the uba5 homodimer. Trans-binding also promotes stabilization of the uba5 homodimer, and enhances ATP-binding. Transfer of ufm1 from uba5 to the E2-like enzyme UFC1 also takes place using a trans mechanism. Ufmylation plays a key role in various processes, such as ribosome recycling, response to DNA damage, interferon response or reticulophagy (also called ER-phagy). The protein is Ubiquitin-like modifier-activating enzyme 5 of Xenopus laevis (African clawed frog).